The following is a 2122-amino-acid chain: MRMQWFLLRHAYFIKGEDFAVAVALLDLALYVLIGTNSLQFLDQSPEKALFGMITSALIFIIALCGFVIVRMFRTSKYKIETYIMPVLIICNIASVFYMQLINKLVGFMTLQLPVLTFLITGYPYVWLVAFVLIGMGGGLIAQSVVCSVSLGSSCPPSVWVDVGLYALQLISGSVAYFTVYELGILIVRYKRHPARYLDAFSDLTALDTIVFSPVFGLGGETARQVQVNQLMAPEKPNLDGLTFLRSASQVSQTTNRIVSRAFYHANTPPHSSSRDALPADKALGAERSDRAGSAVFSPNTLGPLGAPSAGLRDFGPGRPVPGASVVVPKSLKQHAAALHAGANSPHGSPPLQPHGALPGAPRSNTLRGCSGQVSLVPREEESDPACGSLRASVESKATHRSAATLSACESKSRSGRVAGLFRGLSKRPGGPDCEEAAPAEPATSLGSKELGRKKTAGSKAQSSVPILLPRPQSIEETTWRGLASGDLSKDTPVASLASRRNLRMDEQSGDADKASSDVSRDPAKKGAGPFVAEAPVHTAVLPSSSFHSEFPLSRRDSGKELLSDLRESRERTARAASHDTHAAADDSGLQGDPALAAEARVRTALHYHRRWFFSQLFHFRRARRRHRRGAGARDGELVFERGEPDEVESEESCDDSRSRPRETASLSHFSRLSRSRRHKTRTYRRGRSSDGTTAGTSDSDSHGESLEDEGSDSGQESESEESRRRRMRSSRNRRRETSSEDSSSGTSVRSEGRHCREGRANSSVFSSGIRRYFSFFSAATRCAHAASSEEERPVRPARHSWRRGSGDSRECSASTSGVSEACEHSSDASWASSSSLCGSCEKRSIRMSRRRRREGKSRPHASSVSRAERHRGHVSVDLAPLLPSRLFFDTFLNSVRRAERLSKEGRLPASVSRQSSETRGSRTAFLNGDKGCSPTSEAPERSFPASANEVSFRRNEGWERYYDMLLPSLPPFPSARPLYVKPRKNSQAFQNVAVSVSRNETEMTASSPATSFDGPRAVSLSPEGRGARESSDGGGATAPSDLHSRPARAKSLVAAMLHTYPTCPQPPSDLSLFTTPPASPSSLNEVQASRSSSARITSVELGALGKQQGEAAPAGTDAVEEDRDATEDARGSLSSPTGASRRGDRCRRSWSSCEARSSVEMKPNLSIRDARASESPLQSAAPLLSEEKKSRKAQSCAQCRRCGRSRTRLQPSGRLGSSSREDLVGEADSHVSPEKEVFVSSRREKREEQVPRSRREERRDRRGRRWRRGRRRRKARECSETEERRDSSSEWSGTQYSSQERRSHEAVGGVAQLTPICVDDECGKGDAGLSPLLRSEAEESEGEGDMRERQIYETHSDGDVEELSEEEREDRGRSWLRWLFPWGAGEGQGGEKNRRKRSRSEGRREREFISAERRYLEHHRRSRVSSVADSRWGSGSEASADAYPALRRRKGSRVYPVSKPQWFQPSGLTACSSKNSWLAVPPDISLVSAAPALPTPSPSSLSFSGLDQELDCDANSSTAVSSSLPDSTAWQGSGAAASASSPSLRASVDAHFAEAELHAAEHSDGVSVSPRNSPGALSARPMSAAGMPNPDSGIATQTPQTPQTPHTQRPLLLAQSLVAASGKPLPPTRADFEAQRSQGLGDLSQKTPRVFSPQGLGRSQGYGPGGSSYALDSSREAGPSGRLSATPSTRLQGSGGPAFPHSSFPQAIGAAGTPTAPSRDSRTFFGDTGAARASRAGLSGRLASRGTALAPKGTRRLKSGYSVGAADAKDKQKGKVLRYQLVQKFHDRLPWWVARIIVYTDAALENCRRRRRLMQRATWKTKVAMPVRNMLGLFSDEKIETWYVQWLNAFNAKYYPRVAWLLFLICFYATAFHGLLRLRGFIENYPLCIDAVRASPLGEAGFLILVAVRFASQPILSFLLLLPLLRHSGSRLIDFLFCSRAPATPLKSYKLYRWMLALSFLQFVYAVFDNTWHLIAEPGSRHVNPLTIIPASPSLEIAAVQTVYILAVRTPTINLIFLLYIITYIIIFFVALPPGVQQVQLFTISMAGWLFTCVGGQLFYTRAFEVNRRRLFCKYVLPYMLYLEEIAAILYSNPQGEYPLDEGSEDEVSMGSGHLVGDRSA.

The next 5 helical transmembrane spans lie at 19–39, 50–70, 82–102, 115–135, and 145–165; these read FAVA…TNSL, LFGM…FVIV, TYIM…MQLI, VLTF…VLIG, and VVCS…DVGL. 13 disordered regions span residues 337–403, 422–532, 565–591, 627–762, 785–815, 848–870, 903–949, 999–1046, 1068–1308, 1328–1368, 1515–1540, 1560–1608, and 1639–1727; these read AALH…HRSA, FRGL…GPFV, DLRE…SGLQ, HRRG…GRAN, HAAS…CSAS, MSRR…RAER, SKEG…ASAN, RNET…LHSR, PSDL…HEAV, AGLS…SEEE, ANSS…AASA, AAEH…TPHT, and QGLG…TFFG. A compositionally biased stretch (polar residues) spans 363–374; that stretch reads RSNTLRGCSGQV. Composition is skewed to basic and acidic residues over residues 503-525, 565-585, and 632-645; these read LRMD…DPAK, DLRE…HAAA, and GARD…RGEP. Over residues 672–687 the composition is skewed to basic residues; that stretch reads RLSRSRRHKTRTYRRG. Residues 690–699 are compositionally biased toward low complexity; it reads SDGTTAGTSD. Acidic residues predominate over residues 707-720; it reads LEDEGSDSGQESES. Residues 725–735 show a composition bias toward basic residues; sequence RRRMRSSRNRR. Positions 741 to 750 are enriched in low complexity; the sequence is EDSSSGTSVR. Positions 751-760 are enriched in basic and acidic residues; it reads SEGRHCREGR. Asn-762 carries N-linked (GlcNAc...) asparagine glycosylation. Positions 848–860 are enriched in basic residues; that stretch reads MSRRRRREGKSRP. 2 stretches are compositionally biased toward polar residues: residues 999–1011 and 1072–1097; these read RNET…SPAT and SLFT…SARI. N-linked (GlcNAc...) asparagine glycosylation is present at Asn-1000. An N-linked (GlcNAc...) asparagine glycan is attached at Asn-1165. A compositionally biased stretch (basic and acidic residues) spans 1220 to 1261; that stretch reads SREDLVGEADSHVSPEKEVFVSSRREKREEQVPRSRREERRD. Positions 1262–1276 are enriched in basic residues; sequence RRGRRWRRGRRRRKA. 2 stretches are compositionally biased toward basic and acidic residues: residues 1277–1289 and 1345–1359; these read RECS…RDSS and GDMR…HSDG. The segment covering 1515–1527 has biased composition (polar residues); that stretch reads ANSSTAVSSSLPD. Asn-1516 is a glycosylation site (N-linked (GlcNAc...) asparagine). Low complexity-rich tracts occupy residues 1528–1540 and 1597–1608; these read STAW…AASA and TQTPQTPQTPHT. Polar residues predominate over residues 1684-1693; the sequence is LSATPSTRLQ. The next 5 membrane-spanning stretches (helical) occupy residues 1859 to 1879, 1956 to 1976, 1989 to 2009, 2017 to 2037, and 2040 to 2060; these read VAWL…LLRL, MLAL…WHLI, IIPA…ILAV, IFLL…PPGV, and VQLF…GQLF. Residues 2102 to 2122 form a disordered region; sequence DEGSEDEVSMGSGHLVGDRSA.

Interacts with guanylate cyclase GC; the interaction regulates guanylate cyclase GC trafficking and catalytic activity.

The protein resides in the cell membrane. Functionally, in tachyzoites, required for the cellular trafficking of guanylate cyclase GC to the cell membrane and for GC guanylate cyclase activity. In Toxoplasma gondii (strain ATCC 50853 / GT1), this protein is Unique GC organizer UGO.